The following is a 422-amino-acid chain: Testin (422 aa).

The region spanning Met92 to Glu199 is the PET domain. The disordered stretch occupies residues Leu198–Asp224. A compositionally biased stretch (polar residues) spans Lys205–Ala217. LIM zinc-binding domains follow at residues Tyr234–Glu297, Pro299–Ala359, and Gln362–Ser422.

The protein belongs to the prickle / espinas / testin family.

The protein resides in the cytoplasm. Its subcellular location is the cell junction. It is found in the focal adhesion. Its function is as follows. Scaffold protein that may play a role in cell adhesion, cell spreading and in the reorganization of the actin cytoskeleton. May play a role in the regulation of cell proliferation. May inhibit cell growth. The polypeptide is Testin (TES) (Gallus gallus (Chicken)).